A 159-amino-acid chain; its full sequence is Endoribonuclease YbeY (159 aa).

Residues His-125, His-129, and His-135 each coordinate Zn(2+).

It belongs to the endoribonuclease YbeY family. Zn(2+) serves as cofactor.

Its subcellular location is the cytoplasm. Single strand-specific metallo-endoribonuclease involved in late-stage 70S ribosome quality control and in maturation of the 3' terminus of the 16S rRNA. The sequence is that of Endoribonuclease YbeY from Lactiplantibacillus plantarum (strain ATCC BAA-793 / NCIMB 8826 / WCFS1) (Lactobacillus plantarum).